We begin with the raw amino-acid sequence, 264 residues long: ATP synthase subunit a (264 aa).

Helical transmembrane passes span 39-59, 97-117, 139-159, 205-225, and 239-259; these read LDTL…FYIV, VAPL…MDLV, TADP…VIFY, LFGN…LPWW, and LLVI…YISL.

This sequence belongs to the ATPase A chain family. In terms of assembly, F-type ATPases have 2 components, CF(1) - the catalytic core - and CF(0) - the membrane proton channel. CF(1) has five subunits: alpha(3), beta(3), gamma(1), delta(1), epsilon(1). CF(0) has three main subunits: a(1), b(2) and c(9-12). The alpha and beta chains form an alternating ring which encloses part of the gamma chain. CF(1) is attached to CF(0) by a central stalk formed by the gamma and epsilon chains, while a peripheral stalk is formed by the delta and b chains.

It localises to the cell inner membrane. Key component of the proton channel; it plays a direct role in the translocation of protons across the membrane. This chain is ATP synthase subunit a, found in Coxiella burnetii (strain RSA 331 / Henzerling II).